The primary structure comprises 447 residues: Lipid II isoglutaminyl synthase (glutamine-hydrolyzing) subunit MurT (447 aa).

Zn(2+) is bound by residues cysteine 205, cysteine 208, cysteine 227, and cysteine 230. Residue aspartate 355 is part of the active site.

This sequence belongs to the MurCDEF family. MurT subfamily. As to quaternary structure, forms a heterodimer with GatD.

It catalyses the reaction beta-D-GlcNAc-(1-&gt;4)-Mur2Ac(oyl-L-Ala-gamma-D-Glu-L-Lys-D-Ala-D-Ala)-di-trans,octa-cis-undecaprenyl diphosphate + L-glutamine + ATP + H2O = beta-D-GlcNAc-(1-&gt;4)-Mur2Ac(oyl-L-Ala-D-isoglutaminyl-L-Lys-D-Ala-D-Ala)-di-trans,octa-cis-undecaprenyl diphosphate + L-glutamate + ADP + phosphate + H(+). It carries out the reaction beta-D-GlcNAc-(1-&gt;4)-Mur2Ac(oyl-L-Ala-gamma-D-Glu-L-Lys-D-Ala-D-Ala)-di-trans,octa-cis-undecaprenyl diphosphate + ATP = beta-D-GlcNAc-(1-&gt;4)-Mur2Ac(oyl-L-Ala-gamma-D-O-P-Glu-L-Lys-D-Ala-D-Ala)-di-trans,octa-cis-undecaprenyl diphosphate + ADP. The catalysed reaction is beta-D-GlcNAc-(1-&gt;4)-Mur2Ac(oyl-L-Ala-gamma-D-O-P-Glu-L-Lys-D-Ala-D-Ala)-di-trans,octa-cis-undecaprenyl diphosphate + NH4(+) = beta-D-GlcNAc-(1-&gt;4)-Mur2Ac(oyl-L-Ala-D-isoglutaminyl-L-Lys-D-Ala-D-Ala)-di-trans,octa-cis-undecaprenyl diphosphate + phosphate + H(+). The protein operates within cell wall biogenesis; peptidoglycan biosynthesis. In terms of biological role, the lipid II isoglutaminyl synthase complex catalyzes the formation of alpha-D-isoglutamine in the cell wall lipid II stem peptide. The MurT subunit catalyzes the ATP-dependent amidation of D-glutamate residue of lipid II, converting it to an isoglutamine residue. This is Lipid II isoglutaminyl synthase (glutamine-hydrolyzing) subunit MurT from Streptococcus pneumoniae (strain ATCC BAA-255 / R6).